A 329-amino-acid chain; its full sequence is L-carnitine dehydrogenase (329 aa).

19–24 (GAGVIG) contacts NAD(+).

It belongs to the 3-hydroxyacyl-CoA dehydrogenase family. L-carnitine dehydrogenase subfamily. Homodimer.

The protein resides in the cytoplasm. The catalysed reaction is carnitine + NAD(+) = 3-dehydrocarnitine + NADH + H(+). The protein operates within amine and polyamine metabolism; carnitine metabolism. Its function is as follows. Catalyzes the NAD(+)-dependent oxidation of L-carnitine to 3-dehydrocarnitine. This chain is L-carnitine dehydrogenase, found in Nocardiopsis dassonvillei (strain ATCC 23218 / DSM 43111 / CIP 107115 / JCM 7437 / KCTC 9190 / NBRC 14626 / NCTC 10488 / NRRL B-5397 / IMRU 509) (Actinomadura dassonvillei).